Consider the following 267-residue polypeptide: Undecaprenyl-diphosphatase (267 aa).

7 consecutive transmembrane segments (helical) span residues Met1–Val21, Gly40–Trp60, Leu85–Phe105, Ala111–Trp131, Met190–Val210, Asp219–Met239, and Val245–Ala265.

The protein belongs to the UppP family.

Its subcellular location is the cell inner membrane. It carries out the reaction di-trans,octa-cis-undecaprenyl diphosphate + H2O = di-trans,octa-cis-undecaprenyl phosphate + phosphate + H(+). Functionally, catalyzes the dephosphorylation of undecaprenyl diphosphate (UPP). Confers resistance to bacitracin. The protein is Undecaprenyl-diphosphatase of Ruegeria pomeroyi (strain ATCC 700808 / DSM 15171 / DSS-3) (Silicibacter pomeroyi).